Reading from the N-terminus, the 28-residue chain is MVEYLVILSGMFGLALACFFGLRSIKLI.

Residues 2–22 (VEYLVILSGMFGLALACFFGL) traverse the membrane as a helical segment.

This sequence belongs to the PetL family. In terms of assembly, the 4 large subunits of the cytochrome b6-f complex are cytochrome b6, subunit IV (17 kDa polypeptide, PetD), cytochrome f and the Rieske protein, while the 4 small subunits are PetG, PetL, PetM and PetN. The complex functions as a dimer.

It is found in the plastid. It localises to the cyanelle thylakoid membrane. Functionally, component of the cytochrome b6-f complex, which mediates electron transfer between photosystem II (PSII) and photosystem I (PSI), cyclic electron flow around PSI, and state transitions. PetL is important for photoautotrophic growth as well as for electron transfer efficiency and stability of the cytochrome b6-f complex. This chain is Cytochrome b6-f complex subunit 6, found in Cyanophora paradoxa.